A 485-amino-acid polypeptide reads, in one-letter code: Cobyric acid synthase (485 aa).

Residues 249–437 (HLKIRVPVWQ…WHGLFSQPSA (189 aa)) enclose the GATase cobBQ-type domain. Cysteine 330 serves as the catalytic Nucleophile. The active site involves histidine 429.

It belongs to the CobB/CobQ family. CobQ subfamily.

It participates in cofactor biosynthesis; adenosylcobalamin biosynthesis. Functionally, catalyzes amidations at positions B, D, E, and G on adenosylcobyrinic A,C-diamide. NH(2) groups are provided by glutamine, and one molecule of ATP is hydrogenolyzed for each amidation. The chain is Cobyric acid synthase from Saccharophagus degradans (strain 2-40 / ATCC 43961 / DSM 17024).